The primary structure comprises 372 residues: NAD(P)H-quinone oxidoreductase subunit 1 (372 aa).

9 consecutive transmembrane segments (helical) span residues 27–47 (TIWL…GVLV), 65–85 (PEYI…KLVF), 97–117 (WLFT…YLIV), 128–148 (LGIG…GLLM), 176–196 (LALA…IDIV), 204–224 (ILGW…IAAL), 249–269 (YAGM…VLSS), 308–328 (GLGL…AILL), and 351–371 (VGLV…FAFG).

Belongs to the complex I subunit 1 family. In terms of assembly, NDH-1 is composed of at least 11 different subunits.

It is found in the cellular thylakoid membrane. The catalysed reaction is a plastoquinone + NADH + (n+1) H(+)(in) = a plastoquinol + NAD(+) + n H(+)(out). It carries out the reaction a plastoquinone + NADPH + (n+1) H(+)(in) = a plastoquinol + NADP(+) + n H(+)(out). NDH-1 shuttles electrons from an unknown electron donor, via FMN and iron-sulfur (Fe-S) centers, to quinones in the respiratory and/or the photosynthetic chain. The immediate electron acceptor for the enzyme in this species is believed to be plastoquinone. Couples the redox reaction to proton translocation, and thus conserves the redox energy in a proton gradient. The protein is NAD(P)H-quinone oxidoreductase subunit 1 of Acaryochloris marina (strain MBIC 11017).